The chain runs to 542 residues: CTP synthase (542 aa).

The tract at residues 1-265 is amidoligase domain; that stretch reads MTAFIFITGG…GRMLTELLKV (265 aa). A CTP-binding site is contributed by serine 13. Serine 13 is a UTP binding site. ATP is bound at residue 14–19; it reads SVGKGI. Tyrosine 54 is an L-glutamine binding site. Aspartate 71 is a binding site for ATP. Mg(2+) is bound by residues aspartate 71 and glutamate 140. CTP-binding positions include 147 to 149, 186 to 191, and lysine 222; these read DYE and KTKPLQ. UTP-binding positions include 186 to 191 and lysine 222; that span reads KTKPLQ. The Glutamine amidotransferase type-1 domain maps to 297–532; sequence YVKLRDAYIS…LKAALARKMG (236 aa). Glycine 352 is a binding site for L-glutamine. Cysteine 379 acts as the Nucleophile; for glutamine hydrolysis in catalysis. L-glutamine is bound by residues 380-383, glutamate 403, and arginine 460; that span reads YGMQ. Active-site residues include histidine 505 and glutamate 507.

Belongs to the CTP synthase family. As to quaternary structure, homotetramer.

The catalysed reaction is UTP + L-glutamine + ATP + H2O = CTP + L-glutamate + ADP + phosphate + 2 H(+). The enzyme catalyses L-glutamine + H2O = L-glutamate + NH4(+). It carries out the reaction UTP + NH4(+) + ATP = CTP + ADP + phosphate + 2 H(+). Its pathway is pyrimidine metabolism; CTP biosynthesis via de novo pathway; CTP from UDP: step 2/2. Its activity is regulated as follows. Allosterically activated by GTP, when glutamine is the substrate; GTP has no effect on the reaction when ammonia is the substrate. The allosteric effector GTP functions by stabilizing the protein conformation that binds the tetrahedral intermediate(s) formed during glutamine hydrolysis. Inhibited by the product CTP, via allosteric rather than competitive inhibition. In terms of biological role, catalyzes the ATP-dependent amination of UTP to CTP with either L-glutamine or ammonia as the source of nitrogen. Regulates intracellular CTP levels through interactions with the four ribonucleotide triphosphates. The chain is CTP synthase from Caldivirga maquilingensis (strain ATCC 700844 / DSM 13496 / JCM 10307 / IC-167).